The chain runs to 88 residues: Large ribosomal subunit protein eL37 (88 aa).

Residues cysteine 17, cysteine 20, cysteine 32, and cysteine 35 each contribute to the Zn(2+) site. The C4-type zinc-finger motif lies at 17–35; that stretch reads CNRCGRRSFHVQKKTCSSC.

The protein belongs to the eukaryotic ribosomal protein eL37 family. Requires Zn(2+) as cofactor.

Its function is as follows. Binds to the 23S rRNA. The chain is Large ribosomal subunit protein eL37 (RPL37) from Candida albicans (Yeast).